Consider the following 296-residue polypeptide: Nucleotide-binding protein SUB0630 (296 aa).

13-20 (GMSGAGKT) lines the ATP pocket. 63–66 (DMRS) contributes to the GTP binding site.

The protein belongs to the RapZ-like family.

Its function is as follows. Displays ATPase and GTPase activities. This chain is Nucleotide-binding protein SUB0630, found in Streptococcus uberis (strain ATCC BAA-854 / 0140J).